We begin with the raw amino-acid sequence, 329 residues long: Caveolae-associated protein 4a (329 aa).

Disordered stretches follow at residues 198 to 260 (SKEN…NIAK) and 274 to 329 (KERT…IHED). Positions 198-262 (SKENMNKTRE…RLKENIAKKA (65 aa)) form a coiled coil. Positions 201-220 (NMNKTREKTRENLSKTKESL) are enriched in basic and acidic residues. Residues 221–232 (SKTGQTLGTKFN) show a composition bias toward polar residues. The segment covering 242 to 260 (EQREKIKQSSERLKENIAK) has biased composition (basic and acidic residues). The span at 279 to 290 (AEGQEGAEAEPA) shows a compositional bias: low complexity. Position 292 is a phosphothreonine (threonine 292). Residues 310 to 329 (TENKREGPVSEEGATRIHED) are compositionally biased toward basic and acidic residues.

The protein belongs to the CAVIN family.

Its subcellular location is the cytoplasm. The protein resides in the myofibril. It is found in the sarcomere. It localises to the membrane. The protein localises to the caveola. In terms of biological role, induces rhoa activation and activates nppa transcription and myofibrillar organization through the rho/rock signaling pathway. This Danio rerio (Zebrafish) protein is Caveolae-associated protein 4a (cavin4a).